The chain runs to 180 residues: Adenine phosphoribosyltransferase (180 aa).

This sequence belongs to the purine/pyrimidine phosphoribosyltransferase family. Homodimer.

It is found in the cytoplasm. It carries out the reaction AMP + diphosphate = 5-phospho-alpha-D-ribose 1-diphosphate + adenine. The protein operates within purine metabolism; AMP biosynthesis via salvage pathway; AMP from adenine: step 1/1. In terms of biological role, catalyzes a salvage reaction resulting in the formation of AMP, that is energically less costly than de novo synthesis. The chain is Adenine phosphoribosyltransferase from Butyrivibrio fibrisolvens.